The chain runs to 706 residues: Envelope glycoprotein H (706 aa).

The first 18 residues, 1-18 (MQLLCVFCLVLLWEVGAA), serve as a signal peptide directing secretion. Over 19–682 (SLSEVKLHLD…LYEERAHVVL (664 aa)) the chain is Virion surface. Residue Asn-60 is glycosylated (N-linked (GlcNAc...) asparagine; by host). Intrachain disulfides connect Cys-120/Cys-312 and Cys-278/Cys-335. An interaction with gL region spans residues 165-229 (DKFQYTGAMT…QSGDYSLVIV (65 aa)). A glycan (N-linked (GlcNAc...) asparagine; by host) is linked at Asn-435. 2 cysteine pairs are disulfide-bonded: Cys-454/Cys-478 and Cys-534/Cys-587. Asn-549 and Asn-604 each carry an N-linked (GlcNAc...) asparagine; by host glycan. An intrachain disulfide couples Cys-612 to Cys-615. N-linked (GlcNAc...) asparagine; by host glycosylation occurs at Asn-664. The chain crosses the membrane as a helical span at residues 683–703 (AIILYFIAFALGIFLVHKIVM). The Intravirion segment spans residues 704–706 (FFL).

The protein belongs to the herpesviridae glycoprotein H family. Interacts with glycoprotein L (gL); this interaction is necessary for the correct processing and cell surface expression of gH. The heterodimer gH/gL seems to interact with gB trimers during fusion. The heterodimer gH/gL interacts with host EPHA2 to facilitate virus internalization and fusion. Interacts with glycoprotein 42/BZLF2. N-glycosylated, O-glycosylated, and sialylated.

The protein localises to the virion membrane. It is found in the host cell membrane. Its subcellular location is the host endosome membrane. Functionally, the heterodimer glycoprotein H-glycoprotein L is required for the fusion of viral and plasma membranes leading to virus entry into the host cell. Following initial binding to host receptor, membrane fusion is mediated by the fusion machinery composed of gB and the heterodimer gH/gL. May also be involved in the fusion between the virion envelope and the outer nuclear membrane during virion morphogenesis. The heterodimer gH/gL targets also host EPHA2 to promote viral entry. This chain is Envelope glycoprotein H, found in Homo sapiens (Human).